The following is a 527-amino-acid chain: MKKRVQSELSKLSDKSIILEKPRDRQFGHYATPIAFSLAKELRRSPMQIADELAKSFESSSIFEKVEPIKGYVNFKLSESFLDEYATWALKNESEFGKDEQGETILLEFVSANPTGPLHIGHARGAVLGEALSRLGKHLGNEIVKEYYINDAGNQIYLLGLSIYLAAKEELGQEVQWPQEYYRGDYIKDLAKEAIEEFGKEAFSDESLIDKLSEWGKEKMMELIVSNLAAVDIKFDHFVSEKALYEKWDEVFAILKEHDAVYEKDSKVWLKSSEYGDEKDRVVVREDGRPTYLAGDIIYHYDKFKRGFDRYINIWGADHHGYIARVKAAIKFLGFDPDKLEVLLAQMVSLLKGGEPYKMSKRAGNFILMSEVVEEIGADALKFMFLSKKADTHLEFDVDMLKKEDASNPVYYINYAHARINSVLEKAGKSAGEVIDTPLKDLNEDAKDLLFEALILPEIIEDAFAKRELQRLTDYLKALAAQFHSFYNKHKVIGSEYEDRYLKLFLVVALSIRVGLRLLGIEAKKRM.

Positions 112-122 (ANPTGPLHIGH) match the 'HIGH' region motif.

This sequence belongs to the class-I aminoacyl-tRNA synthetase family. In terms of assembly, monomer.

Its subcellular location is the cytoplasm. The catalysed reaction is tRNA(Arg) + L-arginine + ATP = L-arginyl-tRNA(Arg) + AMP + diphosphate. This Nitratiruptor sp. (strain SB155-2) protein is Arginine--tRNA ligase.